Consider the following 114-residue polypeptide: Replication initiation control protein YabA (114 aa).

The Zn(2+) site is built by H84, C86, C102, and C105.

Belongs to the YabA family. As to quaternary structure, homotetramer. Interacts with both DnaA and DnaN, acting as a bridge between these two proteins. Zn(2+) serves as cofactor.

Its subcellular location is the cytoplasm. It is found in the nucleoid. Involved in control of chromosome replication initiation. Inhibits the cooperative binding of DnaA to the oriC region, thus negatively regulating initiation of chromosome replication. Inhibits the ability of DnaA-ATP to form a helix on DNA; does not disassemble preformed DnaA-DNA helices. Decreases the residence time of DnaA on the chromosome at its binding sites (oriC, replication forks and promoter-binding sites). Tethers DnaA to the replication machinery via the DNA polymerase beta sliding clamp subunit (dnaN). Associates with oriC and other DnaA targets on the chromosome in a DnaA-dependent manner. This is Replication initiation control protein YabA from Ligilactobacillus salivarius (strain UCC118) (Lactobacillus salivarius).